The primary structure comprises 344 residues: Dihydroorotate dehydrogenase (quinone) (344 aa).

Residues 64–68 and threonine 88 contribute to the FMN site; that span reads AGLDK. Lysine 68 provides a ligand contact to substrate. 113-117 contributes to the substrate binding site; that stretch reads NRMGF. Positions 144 and 177 each coordinate FMN. Position 177 (asparagine 177) interacts with substrate. Catalysis depends on serine 180, which acts as the Nucleophile. Residue asparagine 182 coordinates substrate. Positions 222 and 250 each coordinate FMN. 251-252 is a binding site for substrate; that stretch reads NT. Residues glycine 273, glycine 302, and 323-324 each bind FMN; that span reads YS.

Belongs to the dihydroorotate dehydrogenase family. Type 2 subfamily. Monomer. FMN is required as a cofactor.

Its subcellular location is the cell membrane. The catalysed reaction is (S)-dihydroorotate + a quinone = orotate + a quinol. It functions in the pathway pyrimidine metabolism; UMP biosynthesis via de novo pathway; orotate from (S)-dihydroorotate (quinone route): step 1/1. Its function is as follows. Catalyzes the conversion of dihydroorotate to orotate with quinone as electron acceptor. The sequence is that of Dihydroorotate dehydrogenase (quinone) from Polynucleobacter necessarius subsp. necessarius (strain STIR1).